Reading from the N-terminus, the 402-residue chain is Septin CDC11 (402 aa).

Met-1 is subject to N-acetylmethionine. Ser-4 carries the phosphoserine modification. A Basic motif motif is present at residues 14 to 21; the sequence is RKRKTLKK. The Septin-type G domain occupies 21–307; sequence KSINFSIMII…ENYRTEALSG (287 aa). Residues 31–38 form a G1 motif region; that stretch reads GESGSGRS. A GTP-binding site is contributed by 31–38; it reads GESGSGRS. Positions 89-92 are G3 motif; it reads DTPN. Positions 171–174 are G4 motif; sequence SKAD. GTP is bound by residues 172-180 and Gly-233; that span reads KADSLTPKE. The stretch at 318–376 forms a coiled coil; sequence AKQEISESDYLMKEEQIKLEEERLRKFEERVHQDLINKRKELLERENELKEIEKRLLAE. Ser-394 carries the phosphoserine; by CDC28 modification. Ser-395 carries the post-translational modification Phosphoserine; by GIN4.

It belongs to the TRAFAC class TrmE-Era-EngA-EngB-Septin-like GTPase superfamily. Septin GTPase family. Component of the septin complex which consists of CDC3, CDC10, CDC11, CDC12 and probably SEP7. The purified septin complex appeared to have a stoichiometry of 2 CDC3, 1 to 2 CDC10, 1 CDC11, 2 CDC12, and 1 or none SEP7 subunit. Interacts with HSL1. Hyphal induction causes immediate phosphorylation at Ser-395 by GIN4 and at Ser-394 by CDC28-CCN1. GIN4 phosphorylation at Ser-395 primes CDC11 for further phosphorylation by CDC28-CCN1. CDC28-HGC1 then maintains CDC11 phosphorylation throughout hyphal growth. Ser-4 is also phosphorylated in yeast cells but not hyphal cells. Post-translationally, met-1 is acetylated.

Its subcellular location is the bud neck. In terms of biological role, septins are GTPases involved in cytokinesis that assemble early in the cell cycle as a patch at the incipient bud site and form a ring before bud emergence, which transforms into an hour-glass shaped collar of cortical filaments that spans both sides of the mother-bud neck. This collar persists until just before cytokinesis, when it splits into two rings that occupy opposite sides of the neck. The septins at the bud neck serve as a structural scaffold that recruits different components involved in diverse processes at specific stages during the cell cycle. Many proteins bind asymmetrically to the septin collar. The septin assembly is regulated by protein kinase GIN4. Septins are also involved in cell morphogenesis, chlamydospores morphogenesis, bud site selection, chitin deposition, cell cycle regulation, cell compartmentalization, and spore wall formation. CDC11 is required for the correct localization of SEC3 at bud tips and bud necks. Plays a key role in invasive growth and virulence. The chain is Septin CDC11 (CDC11) from Candida albicans (strain SC5314 / ATCC MYA-2876) (Yeast).